The sequence spans 3373 residues: Intermembrane lipid transfer protein vps13A (3373 aa).

The region spanning 3–119 (FEGLVSDVLS…QAELKKKKLE (117 aa)) is the Chorein N-terminal domain. 5 disordered regions span residues 818-858 (PKAT…VNSS), 1028-1096 (VPIN…KTAS), 1259-1304 (NNNK…DLEK), 1648-1729 (DPSI…EEEK), and 1872-1913 (QKKR…GKKD). The span at 823-839 (TPINDSNSPSSVSPKLI) shows a compositional bias: polar residues. Low complexity-rich tracts occupy residues 840–858 (STSPHSFSSSSAPVDVNSS) and 1048–1066 (SSPNQQSPNQQSPNQQSPQ). Basic and acidic residues-rich tracts occupy residues 1263-1274 (SIEKSKSIDSKL) and 1288-1304 (RSDDNHEKSERELDLEK). 3 stretches are compositionally biased toward low complexity: residues 1659 to 1685 (QQQQQQSSSSSFIPSQQQQQQKVRSQS), 1695 to 1716 (SSIGGKESKTISSSISNNSLSS), and 1884 to 1898 (SSSTSLPSLNKSTNS). Positions 1899–1909 (FQTSTSGNSNS) are enriched in polar residues. An SHR-BD domain is found at 2405 to 2706 (TLSFYCQYWL…CYGWDEPSAE (302 aa)). The interval 2909 to 2933 (RGNNASNNNNNNGMTSSQMRQSGSG) is disordered. A compositionally biased stretch (low complexity) spans 2911 to 2920 (NNASNNNNNN).

The protein belongs to the VPS13 family.

Its subcellular location is the membrane. Functionally, mediates the transfer of lipids between membranes at organelle contact sites. The protein is Intermembrane lipid transfer protein vps13A (vps13A) of Dictyostelium discoideum (Social amoeba).